The following is a 132-amino-acid chain: Small ribosomal subunit protein uS8c (132 aa).

It belongs to the universal ribosomal protein uS8 family. Part of the 30S ribosomal subunit.

It is found in the plastid. The protein localises to the chloroplast. Its function is as follows. One of the primary rRNA binding proteins, it binds directly to 16S rRNA central domain where it helps coordinate assembly of the platform of the 30S subunit. The polypeptide is Small ribosomal subunit protein uS8c (rps8) (Phaeodactylum tricornutum (strain CCAP 1055/1)).